Reading from the N-terminus, the 198-residue chain is Imidazole glycerol phosphate synthase subunit HisH (198 aa).

The 197-residue stretch at 2 to 198 folds into the Glutamine amidotransferase type-1 domain; the sequence is KALLIDYGSG…ALARRYFEVL (197 aa). Residue C80 is the Nucleophile of the active site. Catalysis depends on residues H176 and E178.

In terms of assembly, heterodimer of HisH and HisF.

It localises to the cytoplasm. It carries out the reaction 5-[(5-phospho-1-deoxy-D-ribulos-1-ylimino)methylamino]-1-(5-phospho-beta-D-ribosyl)imidazole-4-carboxamide + L-glutamine = D-erythro-1-(imidazol-4-yl)glycerol 3-phosphate + 5-amino-1-(5-phospho-beta-D-ribosyl)imidazole-4-carboxamide + L-glutamate + H(+). The enzyme catalyses L-glutamine + H2O = L-glutamate + NH4(+). The protein operates within amino-acid biosynthesis; L-histidine biosynthesis; L-histidine from 5-phospho-alpha-D-ribose 1-diphosphate: step 5/9. In terms of biological role, IGPS catalyzes the conversion of PRFAR and glutamine to IGP, AICAR and glutamate. The HisH subunit catalyzes the hydrolysis of glutamine to glutamate and ammonia as part of the synthesis of IGP and AICAR. The resulting ammonia molecule is channeled to the active site of HisF. The sequence is that of Imidazole glycerol phosphate synthase subunit HisH from Thermus thermophilus (strain ATCC BAA-163 / DSM 7039 / HB27).